The following is a 369-amino-acid chain: Phosphate acyltransferase (369 aa).

Residues 342-369 form a disordered region; the sequence is ASRAPNSQTAGGERAAAVPQSAQLRMDS.

The protein belongs to the PlsX family. Homodimer. Probably interacts with PlsY.

The protein resides in the cytoplasm. The catalysed reaction is a fatty acyl-[ACP] + phosphate = an acyl phosphate + holo-[ACP]. Its pathway is lipid metabolism; phospholipid metabolism. Its function is as follows. Catalyzes the reversible formation of acyl-phosphate (acyl-PO(4)) from acyl-[acyl-carrier-protein] (acyl-ACP). This enzyme utilizes acyl-ACP as fatty acyl donor, but not acyl-CoA. This is Phosphate acyltransferase from Methylocella silvestris (strain DSM 15510 / CIP 108128 / LMG 27833 / NCIMB 13906 / BL2).